The primary structure comprises 99 residues: U1-theraphotoxin-Lsp1b (99 aa).

Positions 1–23 (MRSLTLAALLLCSLLLVFHTSAA) are cleaved as a signal peptide. A propeptide spanning residues 24-50 (EELQAQEGHLMIPGDTDTALETVDDER) is cleaved from the precursor. Disulfide bonds link Cys54–Cys67, Cys58–Cys91, Cys72–Cys74, and Cys85–Cys96.

It belongs to the neurotoxin 12 (Hwtx-2) family. 04 (lasiotoxin) subfamily. As to expression, expressed by the venom gland.

The protein localises to the secreted. Toxin that causes irreversible contractile paralysis into adult Aedes aegypti resulting in 100% mortality after 24 hours. In Lasiodora sp. (strain IBSP 8539) (Brazilian salmon pink birdeater), this protein is U1-theraphotoxin-Lsp1b.